Consider the following 436-residue polypeptide: Glutamyl-tRNA reductase 2 (436 aa).

Substrate contacts are provided by residues 49–52, Ser106, 111–113, and Gln117; these read TCNR and EPQ. Residue Cys50 is the Nucleophile of the active site. 186 to 191 is a binding site for NADP(+); sequence GAGKMC.

It belongs to the glutamyl-tRNA reductase family. In terms of assembly, homodimer.

The catalysed reaction is (S)-4-amino-5-oxopentanoate + tRNA(Glu) + NADP(+) = L-glutamyl-tRNA(Glu) + NADPH + H(+). The protein operates within porphyrin-containing compound metabolism; protoporphyrin-IX biosynthesis; 5-aminolevulinate from L-glutamyl-tRNA(Glu): step 1/2. In terms of biological role, catalyzes the NADPH-dependent reduction of glutamyl-tRNA(Glu) to glutamate 1-semialdehyde (GSA). In Koribacter versatilis (strain Ellin345), this protein is Glutamyl-tRNA reductase 2.